Reading from the N-terminus, the 449-residue chain is mRNA-capping enzyme subunit alpha (449 aa).

Lys-66 (N6-GMP-lysine intermediate) is an active-site residue. Residues 405 to 449 (DERKNGAYQHHSSSFSESRQQPKAEPVAEKKQTEPKYVDDDDWSD) form a disordered region. Over residues 414 to 423 (HHSSSFSESR) the composition is skewed to polar residues. Over residues 424-442 (QQPKAEPVAEKKQTEPKYV) the composition is skewed to basic and acidic residues.

It belongs to the eukaryotic GTase family. Heterodimer. The mRNA-capping enzyme is composed of two separate chains alpha and beta, respectively a mRNA guanylyltransferase and an mRNA 5'-triphosphate monophosphatase.

It localises to the nucleus. It catalyses the reaction a 5'-end diphospho-ribonucleoside in mRNA + GTP + H(+) = a 5'-end (5'-triphosphoguanosine)-ribonucleoside in mRNA + diphosphate. Functionally, second step of mRNA capping. Transfer of the GMP moiety of GTP to the 5'-end of RNA via an enzyme-GMP covalent reaction intermediate. This Candida glabrata (strain ATCC 2001 / BCRC 20586 / JCM 3761 / NBRC 0622 / NRRL Y-65 / CBS 138) (Yeast) protein is mRNA-capping enzyme subunit alpha (CEG1).